Consider the following 467-residue polypeptide: Xanthan biosynthesis protein XanB (467 aa).

The protein belongs to the mannose-6-phosphate isomerase type 2 family.

The enzyme catalyses D-mannose 6-phosphate = D-fructose 6-phosphate. The catalysed reaction is alpha-D-mannose 1-phosphate + GTP + H(+) = GDP-alpha-D-mannose + diphosphate. Its pathway is nucleotide-sugar biosynthesis; GDP-alpha-D-mannose biosynthesis; GDP-alpha-D-mannose from alpha-D-mannose 1-phosphate (GTP route): step 1/1. The protein operates within nucleotide-sugar biosynthesis; GDP-alpha-D-mannose biosynthesis; alpha-D-mannose 1-phosphate from D-fructose 6-phosphate: step 1/2. In terms of biological role, involved in xanthan production. This is Xanthan biosynthesis protein XanB (xanB) from Xanthomonas campestris pv. campestris (strain ATCC 33913 / DSM 3586 / NCPPB 528 / LMG 568 / P 25).